A 635-amino-acid polypeptide reads, in one-letter code: Protein NSP-INTERACTING KINASE 2 (635 aa).

Residues 1 to 32 (MLQGRREAKKSYALFSSTFFFFFICFLSSSSA) form the signal peptide. Over 33–248 (ELTDKGVNFE…DGGTKNRKIA (216 aa)) the chain is Extracellular. Residues Asn-92 and Asn-103 are each glycosylated (N-linked (GlcNAc...) asparagine). LRR repeat units lie at residues 104–128 (LTNLQTVLLQNNYITGNIPHEIGKL), 129–153 (MKLKTLDLSTNNFTGQIPFTLSYSK), 155–176 (LQYLRVNNNSLTGTIPSSLANM), and 177–200 (TQLTFLDLSYNNLSGPVPRSLAKT). N-linked (GlcNAc...) asparagine glycosylation is found at Asn-140, Asn-162, Asn-175, Asn-188, Asn-219, Asn-231, and Asn-235. The segment at 214 to 242 (TEKDCNGTQPKPMSITLNSSQNKSSDGGT) is disordered. The span at 219-241 (NGTQPKPMSITLNSSQNKSSDGG) shows a compositional bias: polar residues. The chain crosses the membrane as a helical span at residues 249–269 (VVFGVSLTCVCLLIIGFGFLL). The Cytoplasmic portion of the chain corresponds to 270–635 (WWRRRHNKQV…VQAMELSGPR (366 aa)). Thr-309 is subject to Phosphothreonine. In terms of domain architecture, Protein kinase spans 312-591 (FSSKNLVGKG…EGDGLVEKWE (280 aa)). Residues 318–326 (VGKGGFGNV) and Lys-340 each bind ATP. A phosphoserine mark is found at Ser-393 and Ser-396. Thr-408 carries the phosphothreonine modification. The interval 422 to 502 (YLHEQCDPKI…DVFGFGILLL (81 aa)) is interaction with geminivirus NSP protein. Asp-435 serves as the catalytic Proton acceptor. Thr-468, Thr-469, and Thr-474 each carry phosphothreonine. Tyr-482 is subject to Phosphotyrosine. At Ser-484 the chain carries Phosphoserine. The residue at position 485 (Thr-485) is a Phosphothreonine. Residue Ser-489 is modified to Phosphoserine. Phosphothreonine is present on Thr-564. The span at 593–613 (SSQRAETNRSYSKPNEFSSSE) shows a compositional bias: polar residues. Positions 593 to 621 (SSQRAETNRSYSKPNEFSSSERYSDLTDD) are disordered.

It belongs to the protein kinase superfamily. Ser/Thr protein kinase family. In terms of assembly, oligomer. Interacts with geminivirus nuclear shuttle protein (NSP). In terms of processing, autophosphorylated. As to expression, expressed in flowers and roots.

The protein localises to the cell membrane. It carries out the reaction L-seryl-[protein] + ATP = O-phospho-L-seryl-[protein] + ADP + H(+). It catalyses the reaction L-threonyl-[protein] + ATP = O-phospho-L-threonyl-[protein] + ADP + H(+). Inhibited by the viral nuclear shuttle protein (NSP) that binds to the region required for oligomerization. In terms of biological role, involved in defense response to geminivirus infection. Phosphorylates RPL10A in vitro. The protein is Protein NSP-INTERACTING KINASE 2 (NIK2) of Arabidopsis thaliana (Mouse-ear cress).